The following is a 157-amino-acid chain: Pyruvoyl-dependent arginine decarboxylase 1 (157 aa).

At Ser41 the chain carries Pyruvic acid (Ser).

This sequence belongs to the PdaD family. The cofactor is pyruvate.

It carries out the reaction L-arginine + H(+) = agmatine + CO2. This Archaeoglobus fulgidus (strain ATCC 49558 / DSM 4304 / JCM 9628 / NBRC 100126 / VC-16) protein is Pyruvoyl-dependent arginine decarboxylase 1 (pdaD1).